The sequence spans 345 residues: Platelet-derived growth factor C (345 aa).

A signal peptide spans 1-22; that stretch reads MLLLGLLLLTSALAGQRTGTRA. The segment covering 24-33 has biased composition (polar residues); that stretch reads SNLSSKLQLS. Positions 24 to 45 are disordered; the sequence is SNLSSKLQLSSDKEQNGVQDPR. An N-linked (GlcNAc...) asparagine glycan is attached at Asn-25. Basic and acidic residues predominate over residues 34–45; sequence SDKEQNGVQDPR. Residues 46 to 163 form the CUB domain; the sequence is HERVVTISGN…PGFCIHYSII (118 aa). Asn-55 is a glycosylation site (N-linked (GlcNAc...) asparagine). Disulfide bonds link Cys-104/Cys-124, Cys-250/Cys-294, Cys-280/Cys-335, and Cys-287/Cys-337.

Belongs to the PDGF/VEGF growth factor family. As to quaternary structure, homodimer; disulfide-linked. Interacts with PDGFRA homodimers, and with heterodimers formed by PDGFRA and PDGFRB. Interacts (via CUB domain) with PLAT (via kringle domain). Proteolytic removal of the N-terminal CUB domain releasing the core domain is necessary for unmasking the receptor-binding epitopes of the core domain. Cleavage after basic residues in the hinge region (region connecting the CUB and growth factor domains) gives rise to the receptor-binding form. Cleaved by PLAT and PLG. Post-translationally, sumoylated with SUMO1. In terms of processing, N-glycosylated. As to expression, highly expressed in the kidney and adrenal gland. In the kidney, it is expressed in arteriolar smooth muscle cells and in epithelial cells of individual segments (at protein level).

Its subcellular location is the cytoplasm. The protein localises to the cytosol. It localises to the secreted. It is found in the nucleus. The protein resides in the cytoplasmic granule. Its subcellular location is the cell membrane. In terms of biological role, growth factor that plays an essential role in the regulation of embryonic development, cell proliferation, cell migration, survival and chemotaxis. Potent mitogen and chemoattractant for cells of mesenchymal origin. Required for normal skeleton formation during embryonic development, especially for normal development of the craniofacial skeleton and for normal development of the palate. Required for normal skin morphogenesis during embryonic development. Plays an important role in wound healing, where it appears to be involved in three stages: inflammation, proliferation and remodeling. Plays an important role in angiogenesis and blood vessel development. Involved in fibrotic processes, in which transformation of interstitial fibroblasts into myofibroblasts plus collagen deposition occurs. The CUB domain has mitogenic activity in coronary artery smooth muscle cells, suggesting a role beyond the maintenance of the latency of the PDGF domain. In the nucleus, PDGFC seems to have additional function. The polypeptide is Platelet-derived growth factor C (Pdgfc) (Rattus norvegicus (Rat)).